Reading from the N-terminus, the 395-residue chain is 8-amino-3,8-dideoxy-alpha-D-manno-octulosonate transaminase (395 aa).

Residue K186 is modified to N6-(pyridoxal phosphate)lysine.

This sequence belongs to the DegT/DnrJ/EryC1 family. It depends on pyridoxal 5'-phosphate as a cofactor.

It catalyses the reaction 8-amino-3,8-dideoxy-alpha-D-manno-octulosonate + 2-oxoglutarate = 3,8-dideoxy-8-oxo-alpha-D-manno-octulosonate + L-glutamate. The protein operates within bacterial outer membrane biogenesis; lipopolysaccharide biosynthesis. Catalyzes the second (last) step of the biosynthesis of Kdo8N (8-amino-3,8-dideoxy-D-manno-octulosonate) from Kdo (3-deoxy-D-manno-octulosonate). In Shewanella oneidensis (strain ATCC 700550 / JCM 31522 / CIP 106686 / LMG 19005 / NCIMB 14063 / MR-1), this protein is 8-amino-3,8-dideoxy-alpha-D-manno-octulosonate transaminase.